The chain runs to 729 residues: Methionine--tRNA ligase (729 aa).

Positions 12–22 (PYVNNIPHLGN) match the 'HIGH' region motif. Zn(2+) contacts are provided by Cys143, Cys146, Cys155, and Cys158. The short motif at 330-334 (KFSKS) is the 'KMSKS' region element. Lys333 is an ATP binding site. The region spanning 565–670 (FSEQVCLKVV…DNPIPGERII (106 aa)) is the tRNA-binding domain.

This sequence belongs to the class-I aminoacyl-tRNA synthetase family. MetG type 1 subfamily. Homodimer. Requires Zn(2+) as cofactor.

It localises to the cytoplasm. It carries out the reaction tRNA(Met) + L-methionine + ATP = L-methionyl-tRNA(Met) + AMP + diphosphate. Is required not only for elongation of protein synthesis but also for the initiation of all mRNA translation through initiator tRNA(fMet) aminoacylation. The protein is Methionine--tRNA ligase of Borrelia hermsii (strain HS1 / DAH).